A 64-amino-acid chain; its full sequence is Bactridin-2 (64 aa).

Positions 1–63 (KDGYLVGNDG…TWNRATNRCG (63 aa)) constitute an LCN-type CS-alpha/beta domain. Disulfide bonds link cysteine 11–cysteine 62, cysteine 15–cysteine 37, cysteine 23–cysteine 43, and cysteine 27–cysteine 45.

This sequence belongs to the long (4 C-C) scorpion toxin superfamily. Sodium channel inhibitor family. Beta subfamily. As to expression, expressed by the venom gland.

Its subcellular location is the secreted. Its function is as follows. Shows antibacterial activity against both Gram-positive bacteria (B.subtilis, M.luteus, E.faecalis) and Gram-negative bacteria (P.aeruginosa, Y.enterocolitica, A.calcoaceticus). Modifies membrane sodium permeability on Y.enterocolitica. Is toxic to mice, but is not to crabs. Induces concentration dependent haemolysis in human erythrocytes. Acts by inhibiting the sodium (Nav) currents. The polypeptide is Bactridin-2 (Tityus discrepans (Venezuelan scorpion)).